The following is an 892-amino-acid chain: DNA mismatch repair protein MutS (892 aa).

607–614 provides a ligand contact to ATP; it reads GPNMSGKS.

This sequence belongs to the DNA mismatch repair MutS family.

This protein is involved in the repair of mismatches in DNA. It is possible that it carries out the mismatch recognition step. This protein has a weak ATPase activity. In Bacillus cereus (strain AH820), this protein is DNA mismatch repair protein MutS.